Reading from the N-terminus, the 553-residue chain is Keratin, type II cytoskeletal 6A (553 aa).

Residues 1 to 20 (MSTKTTIKSQTSHRGYSASS) show a composition bias toward polar residues. The interval 1 to 21 (MSTKTTIKSQTSHRGYSASSA) is disordered. Residues 1–151 (MSTKTTIKSQ…DPTIQRVRTE (151 aa)) are head. Residues 152–187 (EREQIKTLNNKFASFIDKVRFLEQQNKVLDTKWALL) form a coil 1A region. One can recognise an IF rod domain in the interval 152–465 (EREQIKTLNN…KLLEGEECRL (314 aa)). A linker 1 region spans residues 188-206 (QEQGTKTVRQNLEPMFEQY). The tract at residues 207 to 298 (ISNLRRQLDS…ALYEAELSQM (92 aa)) is coil 1B. Residues 299–322 (QTHISDTSVVLSMDNNRSLDLDSI) are linker 12. The tract at residues 323–461 (IAEVKAQYED…ATYRKLLEGE (139 aa)) is coil 2. Residues 462–553 (ECRLNGEGVG…TSSSKKSYRQ (92 aa)) form a tail region. The interval 528-553 (LSSSGGLSSSTIKYTTTSSSKKSYRQ) is disordered. Positions 531–553 (SGGLSSSTIKYTTTSSSKKSYRQ) are enriched in low complexity.

This sequence belongs to the intermediate filament family. As to quaternary structure, heterodimer of a type I and a type II keratin. KRT6 isomers associate with KRT16 and/or KRT17. Interacts with TCHP. Predominates in the adult trunk skin, tongue, trachea/esophagus and eye. In adult skin, localization is restricted to hair follicles, where it is localized predominantly in the outer root sheath.

Functionally, epidermis-specific type I keratin involved in wound healing. Involved in the activation of follicular keratinocytes after wounding, while it does not play a major role in keratinocyte proliferation or migration. Participates in the regulation of epithelial migration by inhibiting the activity of SRC during wound repair. The sequence is that of Keratin, type II cytoskeletal 6A (Krt6a) from Mus musculus (Mouse).